The chain runs to 319 residues: Acetyl-coenzyme A carboxylase carboxyl transferase subunit alpha (319 aa).

Residues 39-293 (RLQKKSNDLT…KAVLEKQLHE (255 aa)) form the CoA carboxyltransferase C-terminal domain.

This sequence belongs to the AccA family. In terms of assembly, acetyl-CoA carboxylase is a heterohexamer composed of biotin carboxyl carrier protein (AccB), biotin carboxylase (AccC) and two subunits each of ACCase subunit alpha (AccA) and ACCase subunit beta (AccD).

It localises to the cytoplasm. The catalysed reaction is N(6)-carboxybiotinyl-L-lysyl-[protein] + acetyl-CoA = N(6)-biotinyl-L-lysyl-[protein] + malonyl-CoA. Its pathway is lipid metabolism; malonyl-CoA biosynthesis; malonyl-CoA from acetyl-CoA: step 1/1. In terms of biological role, component of the acetyl coenzyme A carboxylase (ACC) complex. First, biotin carboxylase catalyzes the carboxylation of biotin on its carrier protein (BCCP) and then the CO(2) group is transferred by the carboxyltransferase to acetyl-CoA to form malonyl-CoA. This Neisseria meningitidis serogroup A / serotype 4A (strain DSM 15465 / Z2491) protein is Acetyl-coenzyme A carboxylase carboxyl transferase subunit alpha.